Consider the following 165-residue polypeptide: Neurotrophin-3 (165 aa).

The signal sequence occupies residues Ile1 to Ser3. The propeptide occupies Thr4–Arg119. Asn112 carries an N-linked (GlcNAc...) asparagine glycan.

The protein belongs to the NGF-beta family.

It is found in the secreted. In terms of biological role, seems to promote the survival of visceral and proprioceptive sensory neurons. This chain is Neurotrophin-3 (NTF3), found in Calabaria reinhardtii (Calabar boa).